A 1083-amino-acid polypeptide reads, in one-letter code: Error-prone DNA polymerase (1083 aa).

This sequence belongs to the DNA polymerase type-C family. DnaE2 subfamily.

The protein localises to the cytoplasm. The catalysed reaction is DNA(n) + a 2'-deoxyribonucleoside 5'-triphosphate = DNA(n+1) + diphosphate. Its function is as follows. DNA polymerase involved in damage-induced mutagenesis and translesion synthesis (TLS). It is not the major replicative DNA polymerase. This is Error-prone DNA polymerase from Xanthomonas oryzae pv. oryzae (strain KACC10331 / KXO85).